An 88-amino-acid polypeptide reads, in one-letter code: Large ribosomal subunit protein bL31B (88 aa).

This sequence belongs to the bacterial ribosomal protein bL31 family. Type B subfamily. In terms of assembly, part of the 50S ribosomal subunit.

This Corynebacterium diphtheriae (strain ATCC 700971 / NCTC 13129 / Biotype gravis) protein is Large ribosomal subunit protein bL31B.